The sequence spans 164 residues: CDP-archaeol synthase (164 aa).

4 consecutive transmembrane segments (helical) span residues 3–23, 51–71, 77–97, and 122–142; these read LLYFFLLIWPPYVANGSAVLA, YEGFLIGLSTGTFIGYAPNLL, LLDAFVLSIAALLGDLFGAFI, and LAVYTLYKDISVEYIIAAVII.

The protein belongs to the CDP-archaeol synthase family. It depends on Mg(2+) as a cofactor.

The protein resides in the cell membrane. It catalyses the reaction 2,3-bis-O-(geranylgeranyl)-sn-glycerol 1-phosphate + CTP + H(+) = CDP-2,3-bis-O-(geranylgeranyl)-sn-glycerol + diphosphate. It functions in the pathway membrane lipid metabolism; glycerophospholipid metabolism. Functionally, catalyzes the formation of CDP-2,3-bis-(O-geranylgeranyl)-sn-glycerol (CDP-archaeol) from 2,3-bis-(O-geranylgeranyl)-sn-glycerol 1-phosphate (DGGGP) and CTP. This reaction is the third ether-bond-formation step in the biosynthesis of archaeal membrane lipids. This is CDP-archaeol synthase from Pyrobaculum islandicum (strain DSM 4184 / JCM 9189 / GEO3).